The chain runs to 421 residues: Indole-3-pyruvate monooxygenase YUCCA8 (421 aa).

30 to 35 (GAGPSG) is an FAD binding site. 201–206 (GCGNSG) serves as a coordination point for NADP(+).

This sequence belongs to the FMO family. FAD serves as cofactor. In terms of tissue distribution, expressed in organs undergoing active growth and cell division.

It is found in the endoplasmic reticulum. The catalysed reaction is indole-3-pyruvate + NADPH + O2 + H(+) = (indol-3-yl)acetate + CO2 + NADP(+) + H2O. Functionally, involved in auxin biosynthesis. Converts the indole-3-pyruvic acid (IPA) produced by the TAA family to indole-3-acetic acid (IAA). Seems not able to use tryptamine (TAM) as substrate. Probably responsible for auxin biosynthesis in leaves and involved in the regulation of lateral leaf growth. Required for maintaining water homeostasis and an appropriate root to shoot ratio. Required for the inhibition of root growth by ethylene in etiolated seedlings. Functions downstream of the ethylene-response transcription factor EIL1. The polypeptide is Indole-3-pyruvate monooxygenase YUCCA8 (Oryza sativa subsp. indica (Rice)).